Here is a 370-residue protein sequence, read N- to C-terminus: Galactose-1-phosphate uridylyltransferase (370 aa).

The Zn(2+) site is built by Cys51 and Cys54. UDP-alpha-D-glucose is bound by residues Ala60 and 76–77; that span reads NG. A Zn(2+)-binding site is contributed by His121. Asn166 is a binding site for UDP-alpha-D-glucose. His177 serves as a coordination point for Zn(2+). Catalysis depends on His179, which acts as the Tele-UMP-histidine intermediate. Gln181 serves as a coordination point for UDP-alpha-D-glucose. 4 residues coordinate Fe cation: Glu195, His294, His311, and His313. UDP-alpha-D-glucose-binding positions include 326–329 and 331–332; these read KFLV and FE.

It belongs to the galactose-1-phosphate uridylyltransferase type 1 family. In terms of assembly, homodimer. The cofactor is Zn(2+).

It catalyses the reaction alpha-D-galactose 1-phosphate + UDP-alpha-D-glucose = alpha-D-glucose 1-phosphate + UDP-alpha-D-galactose. The protein operates within carbohydrate metabolism; galactose metabolism. This chain is Galactose-1-phosphate uridylyltransferase (GAL7), found in Kluyveromyces lactis (strain ATCC 8585 / CBS 2359 / DSM 70799 / NBRC 1267 / NRRL Y-1140 / WM37) (Yeast).